The chain runs to 138 residues: Cysteine desulfuration protein SufE (138 aa).

Cys-51 functions as the Cysteine persulfide intermediate in the catalytic mechanism.

This sequence belongs to the SufE family. In terms of assembly, homodimer. Interacts with SufS.

It localises to the cytoplasm. The protein operates within cofactor biosynthesis; iron-sulfur cluster biosynthesis. Functionally, participates in cysteine desulfuration mediated by SufS. Cysteine desulfuration mobilizes sulfur from L-cysteine to yield L-alanine and constitutes an essential step in sulfur metabolism for biosynthesis of a variety of sulfur-containing biomolecules. Functions as a sulfur acceptor for SufS, by mediating the direct transfer of the sulfur atom from the S-sulfanylcysteine of SufS, an intermediate product of cysteine desulfuration process. The polypeptide is Cysteine desulfuration protein SufE (Escherichia fergusonii (strain ATCC 35469 / DSM 13698 / CCUG 18766 / IAM 14443 / JCM 21226 / LMG 7866 / NBRC 102419 / NCTC 12128 / CDC 0568-73)).